Here is a 120-residue protein sequence, read N- to C-terminus: C-C motif chemokine 23 (120 aa).

An N-terminal signal peptide occupies residues 1–21 (MKVSVAALSCLMLVTALGSQA). Cystine bridges form between Cys54-Cys78, Cys55-Cys94, and Cys65-Cys105.

This sequence belongs to the intercrine beta (chemokine CC) family.

It localises to the secreted. Its function is as follows. Shows chemotactic activity for monocytes, resting T-lymphocytes, and neutrophils, but not for activated lymphocytes. Inhibits proliferation of myeloid progenitor cells in colony formation assays. This protein can bind heparin. Binds CCR1. This chain is C-C motif chemokine 23 (CCL23), found in Macaca mulatta (Rhesus macaque).